A 212-amino-acid chain; its full sequence is Thiamine-phosphate synthase (212 aa).

4-amino-2-methyl-5-(diphosphooxymethyl)pyrimidine contacts are provided by residues 39–43 and asparagine 71; that span reads QLRIK. Mg(2+) contacts are provided by aspartate 72 and aspartate 91. Serine 110 contacts 4-amino-2-methyl-5-(diphosphooxymethyl)pyrimidine. 136 to 138 serves as a coordination point for 2-[(2R,5Z)-2-carboxy-4-methylthiazol-5(2H)-ylidene]ethyl phosphate; it reads TQT. Lysine 139 is a binding site for 4-amino-2-methyl-5-(diphosphooxymethyl)pyrimidine. 2-[(2R,5Z)-2-carboxy-4-methylthiazol-5(2H)-ylidene]ethyl phosphate is bound by residues glycine 168 and 188–189; that span reads VS.

The protein belongs to the thiamine-phosphate synthase family. It depends on Mg(2+) as a cofactor.

It catalyses the reaction 2-[(2R,5Z)-2-carboxy-4-methylthiazol-5(2H)-ylidene]ethyl phosphate + 4-amino-2-methyl-5-(diphosphooxymethyl)pyrimidine + 2 H(+) = thiamine phosphate + CO2 + diphosphate. The enzyme catalyses 2-(2-carboxy-4-methylthiazol-5-yl)ethyl phosphate + 4-amino-2-methyl-5-(diphosphooxymethyl)pyrimidine + 2 H(+) = thiamine phosphate + CO2 + diphosphate. It carries out the reaction 4-methyl-5-(2-phosphooxyethyl)-thiazole + 4-amino-2-methyl-5-(diphosphooxymethyl)pyrimidine + H(+) = thiamine phosphate + diphosphate. It participates in cofactor biosynthesis; thiamine diphosphate biosynthesis; thiamine phosphate from 4-amino-2-methyl-5-diphosphomethylpyrimidine and 4-methyl-5-(2-phosphoethyl)-thiazole: step 1/1. Condenses 4-methyl-5-(beta-hydroxyethyl)thiazole monophosphate (THZ-P) and 2-methyl-4-amino-5-hydroxymethyl pyrimidine pyrophosphate (HMP-PP) to form thiamine monophosphate (TMP). This is Thiamine-phosphate synthase from Serratia proteamaculans (strain 568).